We begin with the raw amino-acid sequence, 794 residues long: DNA ligase (794 aa).

Positions 1-47 are disordered; that stretch reads MEEDLFSLAAGKQPSQQATNETAPRAGEARENAGTDHPGNAEDPAHR. Residues 13–22 are compositionally biased toward polar residues; it reads QPSQQATNET. The segment covering 27–47 has biased composition (basic and acidic residues); it reads GEARENAGTDHPGNAEDPAHR. Residues 73–77, 122–123, and Glu160 contribute to the NAD(+) site; these read DAEYD and SI. The active-site N6-AMP-lysine intermediate is the Lys162. Arg183, Glu219, Lys335, and Lys359 together coordinate NAD(+). Cys457, Cys460, Cys475, and Cys480 together coordinate Zn(2+). The 78-residue stretch at 717–794 folds into the BRCT domain; that stretch reads IPAGSLSGKT…EEDFYKMIGN (78 aa).

This sequence belongs to the NAD-dependent DNA ligase family. LigA subfamily. Mg(2+) serves as cofactor. It depends on Mn(2+) as a cofactor.

The enzyme catalyses NAD(+) + (deoxyribonucleotide)n-3'-hydroxyl + 5'-phospho-(deoxyribonucleotide)m = (deoxyribonucleotide)n+m + AMP + beta-nicotinamide D-nucleotide.. Functionally, DNA ligase that catalyzes the formation of phosphodiester linkages between 5'-phosphoryl and 3'-hydroxyl groups in double-stranded DNA using NAD as a coenzyme and as the energy source for the reaction. It is essential for DNA replication and repair of damaged DNA. In Akkermansia muciniphila (strain ATCC BAA-835 / DSM 22959 / JCM 33894 / BCRC 81048 / CCUG 64013 / CIP 107961 / Muc), this protein is DNA ligase.